The primary structure comprises 87 residues: Small ribosomal subunit protein bS20 (87 aa).

Residues 1 to 22 (MANSAQARKRARQSVKQRAHNA) form a disordered region. Over residues 7 to 19 (ARKRARQSVKQRA) the composition is skewed to basic residues.

Belongs to the bacterial ribosomal protein bS20 family.

Its function is as follows. Binds directly to 16S ribosomal RNA. This Neisseria gonorrhoeae (strain ATCC 700825 / FA 1090) protein is Small ribosomal subunit protein bS20.